Consider the following 378-residue polypeptide: 23S rRNA (uracil(747)-C(5))-methyltransferase RlmC (378 aa).

[4Fe-4S] cluster contacts are provided by C3, C11, C14, and C87. S-adenosyl-L-methionine contacts are provided by Q212, F241, E262, and N309. The active-site Nucleophile is C336.

Belongs to the class I-like SAM-binding methyltransferase superfamily. RNA M5U methyltransferase family. RlmC subfamily.

It carries out the reaction uridine(747) in 23S rRNA + S-adenosyl-L-methionine = 5-methyluridine(747) in 23S rRNA + S-adenosyl-L-homocysteine + H(+). Functionally, catalyzes the formation of 5-methyl-uridine at position 747 (m5U747) in 23S rRNA. This is 23S rRNA (uracil(747)-C(5))-methyltransferase RlmC from Shewanella pealeana (strain ATCC 700345 / ANG-SQ1).